Reading from the N-terminus, the 106-residue chain is uncharacterized protein (106 aa).

Residues 28–68 form a disordered region; it reads SSANEPKKLPNKKLVSTKSHTQVNREKSKNKDTYEDYSDSN. Positions 50 to 61 are enriched in basic and acidic residues; sequence VNREKSKNKDTY.

This is an uncharacterized protein from Acanthamoeba polyphaga (Amoeba).